Reading from the N-terminus, the 281-residue chain is Probable endonuclease 4 (281 aa).

Zn(2+) contacts are provided by His69, His109, Glu145, Asp179, His182, His216, Asp229, His231, and Glu261.

This sequence belongs to the AP endonuclease 2 family. The cofactor is Zn(2+).

It carries out the reaction Endonucleolytic cleavage to 5'-phosphooligonucleotide end-products.. In terms of biological role, endonuclease IV plays a role in DNA repair. It cleaves phosphodiester bonds at apurinic or apyrimidinic (AP) sites, generating a 3'-hydroxyl group and a 5'-terminal sugar phosphate. In Nautilia profundicola (strain ATCC BAA-1463 / DSM 18972 / AmH), this protein is Probable endonuclease 4.